Reading from the N-terminus, the 454-residue chain is SH2 domain-containing protein 4A (454 aa).

Disordered stretches follow at residues 45–65 (AMERKESLPVKPRPKKENGKS), 107–131 (EQEAEEPRKTHSEEFTNSLKTKSQY), 152–177 (KEELEQGSRPAPTLEEEKIRSLSSSS), and 237–302 (RKSK…AYPQ). Residues 107 to 120 (EQEAEEPRKTHSEE) are compositionally biased toward basic and acidic residues. Phosphoserine is present on residues serine 118 and serine 124. Basic and acidic residues predominate over residues 240-259 (KAADEKRRSLAKQAREDYKR). Serine 261 and serine 315 each carry phosphoserine. In terms of domain architecture, SH2 spans 347-440 (WFHGILTLKK…LGKELLLYPC (94 aa)).

As to quaternary structure, interacts with ESR1. In terms of tissue distribution, ubiquitously expressed. Aberrantly expressed in some cancers.

The protein localises to the cytoplasm. Its function is as follows. Inhibits estrogen-induced cell proliferation by competing with PLCG for binding to ESR1, blocking the effect of estrogen on PLCG and repressing estrogen-induced proliferation. May play a role in T-cell development and function. The sequence is that of SH2 domain-containing protein 4A (SH2D4A) from Homo sapiens (Human).